A 148-amino-acid chain; its full sequence is Single-stranded DNA-binding protein, mitochondrial (148 aa).

Residues 1 to 16 (MFRRPALQVLRQFVRH) constitute a mitochondrion transit peptide. Residues 30-141 (LNRVQLLGRV…IIADNIVFLS (112 aa)) form the SSB domain. 2 positions are modified to phosphoserine: S67 and S79. K113 carries the post-translational modification N6-acetyllysine. K122 carries the N6-succinyllysine modification.

As to quaternary structure, homotetramer. Interacts with MPG/AAG, through inhibition of its glycosylase activity it potentially prevents formation of DNA breaks in ssDNA, ensuring that base removal primarily occurs in dsDNA. Interacts with POLDIP2. Interacts with PRIMPOL.

It localises to the mitochondrion. The protein localises to the mitochondrion matrix. It is found in the mitochondrion nucleoid. In terms of biological role, binds preferentially and cooperatively to pyrimidine rich single-stranded DNA (ss-DNA). In vitro, required to maintain the copy number of mitochondrial DNA (mtDNA) and plays a crucial role during mtDNA replication by stimulating the activity of the replisome components POLG and TWNK at the replication fork. Promotes the activity of the gamma complex polymerase POLG, largely by organizing the template DNA and eliminating secondary structures to favor ss-DNA conformations that facilitate POLG activity. In addition it is able to promote the 5'-3' unwinding activity of the mtDNA helicase TWNK. May also function in mtDNA repair. This chain is Single-stranded DNA-binding protein, mitochondrial (SSBP1), found in Oryctolagus cuniculus (Rabbit).